The sequence spans 445 residues: Glucose-6-phosphate isomerase (445 aa).

The active-site Proton donor is the Glu284. Active-site residues include His305 and Lys419.

The protein belongs to the GPI family.

Its subcellular location is the cytoplasm. The catalysed reaction is alpha-D-glucose 6-phosphate = beta-D-fructose 6-phosphate. It functions in the pathway carbohydrate biosynthesis; gluconeogenesis. The protein operates within carbohydrate degradation; glycolysis; D-glyceraldehyde 3-phosphate and glycerone phosphate from D-glucose: step 2/4. Its function is as follows. Catalyzes the reversible isomerization of glucose-6-phosphate to fructose-6-phosphate. The chain is Glucose-6-phosphate isomerase from Leptospira borgpetersenii serovar Hardjo-bovis (strain JB197).